A 158-amino-acid polypeptide reads, in one-letter code: Transcription elongation factor GreA (158 aa).

Residues 24–43 (DVERPKASEAIGEARDKGDL) are compositionally biased toward basic and acidic residues. The segment at 24 to 47 (DVERPKASEAIGEARDKGDLSENA) is disordered. Positions 48–68 (EYDAAKEAQGLLEMKISKMEE) form a coiled coil.

Belongs to the GreA/GreB family.

Its function is as follows. Necessary for efficient RNA polymerase transcription elongation past template-encoded arresting sites. The arresting sites in DNA have the property of trapping a certain fraction of elongating RNA polymerases that pass through, resulting in locked ternary complexes. Cleavage of the nascent transcript by cleavage factors such as GreA or GreB allows the resumption of elongation from the new 3'terminus. GreA releases sequences of 2 to 3 nucleotides. This is Transcription elongation factor GreA from Christiangramia forsetii (strain DSM 17595 / CGMCC 1.15422 / KT0803) (Gramella forsetii).